The sequence spans 361 residues: Histidinol-phosphate aminotransferase (361 aa).

N6-(pyridoxal phosphate)lysine is present on K219.

The protein belongs to the class-II pyridoxal-phosphate-dependent aminotransferase family. Histidinol-phosphate aminotransferase subfamily. Homodimer. Pyridoxal 5'-phosphate serves as cofactor.

The catalysed reaction is L-histidinol phosphate + 2-oxoglutarate = 3-(imidazol-4-yl)-2-oxopropyl phosphate + L-glutamate. The protein operates within amino-acid biosynthesis; L-histidine biosynthesis; L-histidine from 5-phospho-alpha-D-ribose 1-diphosphate: step 7/9. In Cereibacter sphaeroides (strain KD131 / KCTC 12085) (Rhodobacter sphaeroides), this protein is Histidinol-phosphate aminotransferase.